The chain runs to 521 residues: uncharacterized protein (521 aa).

10 helical membrane-spanning segments follow: residues N103–P123, F136–T156, Y177–W197, I200–F220, A259–V279, I299–I319, Y327–R346, F358–M378, C411–G431, and F450–L470.

The protein resides in the membrane. This is an uncharacterized protein from Schizosaccharomyces pombe (strain 972 / ATCC 24843) (Fission yeast).